Reading from the N-terminus, the 100-residue chain is NAD(P)H-quinone oxidoreductase subunit 4L, chloroplastic (100 aa).

Helical transmembrane passes span 1-21 (MLEN…YGLT), 30-50 (LMCL…FSSF), and 60-80 (VFAI…LAII).

The protein belongs to the complex I subunit 4L family. In terms of assembly, NDH is composed of at least 16 different subunits, 5 of which are encoded in the nucleus.

It is found in the plastid. Its subcellular location is the chloroplast thylakoid membrane. The catalysed reaction is a plastoquinone + NADH + (n+1) H(+)(in) = a plastoquinol + NAD(+) + n H(+)(out). It catalyses the reaction a plastoquinone + NADPH + (n+1) H(+)(in) = a plastoquinol + NADP(+) + n H(+)(out). In terms of biological role, NDH shuttles electrons from NAD(P)H:plastoquinone, via FMN and iron-sulfur (Fe-S) centers, to quinones in the photosynthetic chain and possibly in a chloroplast respiratory chain. The immediate electron acceptor for the enzyme in this species is believed to be plastoquinone. Couples the redox reaction to proton translocation, and thus conserves the redox energy in a proton gradient. The sequence is that of NAD(P)H-quinone oxidoreductase subunit 4L, chloroplastic from Staurastrum punctulatum (Green alga).